Consider the following 345-residue polypeptide: Tyrosine-binding protein (345 aa).

Residues 1–23 form the signal peptide; the sequence is MIKSKKILSLIIAGVLGVSMLTG. C24 carries N-palmitoyl cysteine lipidation. The S-diacylglycerol cysteine moiety is linked to residue C24.

The complex is probably composed of two ATP-binding proteins (CDR20291_0806), two transmembrane proteins (CDR20291_0807) and a solute-binding protein (CDR20291_0805).

It localises to the cell membrane. Probably part of an ABC transporter complex involved in tyrosine uptake. May also import phenylalanine. The polypeptide is Tyrosine-binding protein (Clostridioides difficile (strain R20291) (Peptoclostridium difficile)).